Consider the following 804-residue polypeptide: Leucine--tRNA ligase (804 aa).

The 'HIGH' region signature appears at 40-51 (PYPSGAGLHVGH). A 'KMSKS' region motif is present at residues 576 to 580 (KMSKS). An ATP-binding site is contributed by K579.

The protein belongs to the class-I aminoacyl-tRNA synthetase family.

It localises to the cytoplasm. It catalyses the reaction tRNA(Leu) + L-leucine + ATP = L-leucyl-tRNA(Leu) + AMP + diphosphate. This Staphylococcus epidermidis (strain ATCC 35984 / DSM 28319 / BCRC 17069 / CCUG 31568 / BM 3577 / RP62A) protein is Leucine--tRNA ligase.